The chain runs to 899 residues: Linoleate 13S-lipoxygenase 2-1, chloroplastic (899 aa).

The transit peptide at 1-40 directs the protein to the chloroplast; it reads MLKPQLQQSSQSTKALIPSWNTNPLFLASFPINILNKNFR. The PLAT domain occupies 78–200; sequence VQKQVNLNLS…DNPDKRIFFT (123 aa). Positions 203 to 899 constitute a Lipoxygenase domain; that stretch reads SYLPSQTPSG…GKGVPYSISI (697 aa). A disordered region spans residues 252 to 287; it reads SNNDDAKRPVLGGKELPYPRRCKTGRPRSKKDPLSE. Residues 271 to 280 are compositionally biased toward basic residues; it reads RRCKTGRPRS. 5 residues coordinate Fe cation: H557, H562, H749, N753, and I899.

It belongs to the lipoxygenase family. In terms of assembly, monomer. The cofactor is Fe cation. As to expression, expressed in leaves and floral buds.

It is found in the plastid. The protein localises to the chloroplast stroma. The protein resides in the chloroplast thylakoid. The enzyme catalyses (9Z,12Z)-octadecadienoate + O2 = (13S)-hydroperoxy-(9Z,11E)-octadecadienoate. It catalyses the reaction (9Z,12Z,15Z)-octadecatrienoate + O2 = (13S)-hydroperoxy-(9Z,11E,15Z)-octadecatrienoate. Its pathway is lipid metabolism; oxylipin biosynthesis. Functionally, plant lipoxygenase involved in a number of diverse aspects of plant physiology including growth and development, pest resistance, and senescence. May not be involved in the bulk production of jasmonate upon wounding. Catalyzes the hydroperoxidation of lipids containing a cis,cis-1,4-pentadiene structure. Linolenic acid is the preferred substrate, before linoleic and arachidonic acids. Also has some activity with phosphatidylglycerol, but not with galactolipids. The polypeptide is Linoleate 13S-lipoxygenase 2-1, chloroplastic (Solanum tuberosum (Potato)).